Here is a 488-residue protein sequence, read N- to C-terminus: C2H2-type transcription factor MSN2 (488 aa).

C2H2-type zinc fingers lie at residues 376 to 399 and 405 to 427; these read FVCD…RSLH and FECN…ARTH.

The protein resides in the nucleus. The protein localises to the cytoplasm. Its function is as follows. Transcription factor that acts as a key downstream transcription factor in the HOG1-MAPK pathway. Plays crucial roles in the regulation of conidiation, virulence and multi-stress responses. Acts as a negative regulator of proteases, lipases, as well as of the red-pigmented oosporein production, and contributes to virulence and growth in response to external pH. Contributes to the ability to infect Rhipicephalus microplus (Acari, Ixodidae) via the cuticle-penetration requiring route involving proteolytic activity at the host cuticle. Does not seem to be involved in subsequent growth and proliferation once the tick cuticle has been breached. This Beauveria bassiana (strain ARSEF 2860) (White muscardine disease fungus) protein is C2H2-type transcription factor MSN2.